The sequence spans 245 residues: Transcriptional activator protein ExpR (245 aa).

An HTH luxR-type domain is found at 173 to 238 (RSNDKDIFSQ…HAIRLGIELQ (66 aa)). The segment at residues 197 to 216 (YQEIALILDIKTGTVKFHIG) is a DNA-binding region (H-T-H motif).

This sequence belongs to the autoinducer-regulated transcriptional regulatory protein family.

Its function is as follows. Functions as an OHLL responsive transcriptional regulator that acts in virulence (soft rot disease) through the activation of genes for plant tissue macerating enzymes. The protein is Transcriptional activator protein ExpR (expR) of Pectobacterium parmentieri.